The chain runs to 178 residues: Probable inosine/xanthosine triphosphatase (178 aa).

The protein belongs to the YjjX NTPase family. In terms of assembly, homodimer. It depends on Mg(2+) as a cofactor. Requires Mn(2+) as cofactor.

It carries out the reaction XTP + H2O = XDP + phosphate + H(+). It catalyses the reaction ITP + H2O = IDP + phosphate + H(+). Its function is as follows. Phosphatase that hydrolyzes non-canonical purine nucleotides such as XTP and ITP to their respective diphosphate derivatives. Probably excludes non-canonical purines from DNA/RNA precursor pool, thus preventing their incorporation into DNA/RNA and avoiding chromosomal lesions. The protein is Probable inosine/xanthosine triphosphatase of Pyrobaculum aerophilum (strain ATCC 51768 / DSM 7523 / JCM 9630 / CIP 104966 / NBRC 100827 / IM2).